A 374-amino-acid chain; its full sequence is Alcohol dehydrogenase 1 (374 aa).

Ser-1 is subject to N-acetylserine. Zn(2+)-binding residues include Cys-46, His-67, Cys-97, Cys-100, Cys-103, Cys-111, and Cys-174. NAD(+) is bound by residues 199 to 204 (GLGGVG), Asp-223, Lys-228, 292 to 294 (VGV), and Arg-369.

Belongs to the zinc-containing alcohol dehydrogenase family. Class-I subfamily. In terms of assembly, homodimer. Requires Zn(2+) as cofactor.

It localises to the cytoplasm. It carries out the reaction a primary alcohol + NAD(+) = an aldehyde + NADH + H(+). The enzyme catalyses a secondary alcohol + NAD(+) = a ketone + NADH + H(+). The sequence is that of Alcohol dehydrogenase 1 (ADH1) from Struthio camelus (Common ostrich).